The sequence spans 161 residues: Cuticle protein 16.8 (161 aa).

Position 1 is a pyrrolidone carboxylic acid (Q1). The span at 1–10 (QSEPAGPPQP) shows a compositional bias: pro residues. Disordered regions lie at residues 1–44 (QSEP…YSYT) and 67–103 (ETNEPGTKTSNPADAQIVSNAATDSYSPSPASSPAKP). The region spanning 8-74 (PQPYTFSYDN…TVETNEPGTK (67 aa)) is the Chitin-binding type R&amp;R domain. Polar residues predominate over residues 67 to 86 (ETNEPGTKTSNPADAQIVSN). Residues 87–103 (AATDSYSPSPASSPAKP) are compositionally biased toward low complexity.

Its function is as follows. Component of the cuticle of the tick. Binds chitin. The sequence is that of Cuticle protein 16.8 from Ixodes ricinus (Common tick).